The primary structure comprises 338 residues: Ribosomal RNA small subunit methyltransferase H (338 aa).

Residues 53 to 55, aspartate 72, tyrosine 99, aspartate 123, and glutamine 130 contribute to the S-adenosyl-L-methionine site; that span reads GGH. The tract at residues 277 to 298 is disordered; that stretch reads ITPRSKSKSPEGLPVELPGMGP.

Belongs to the methyltransferase superfamily. RsmH family.

The protein localises to the cytoplasm. The catalysed reaction is cytidine(1402) in 16S rRNA + S-adenosyl-L-methionine = N(4)-methylcytidine(1402) in 16S rRNA + S-adenosyl-L-homocysteine + H(+). Specifically methylates the N4 position of cytidine in position 1402 (C1402) of 16S rRNA. This chain is Ribosomal RNA small subunit methyltransferase H, found in Rhodococcus opacus (strain B4).